Consider the following 362-residue polypeptide: tRNA N6-adenosine threonylcarbamoyltransferase (362 aa).

Residues histidine 116 and histidine 120 each coordinate Fe cation. Substrate is bound by residues 138–142, aspartate 171, glycine 184, and asparagine 284; that span reads LVSGG. Fe cation is bound at residue aspartate 312.

It belongs to the KAE1 / TsaD family. The cofactor is Fe(2+).

The protein localises to the cytoplasm. It catalyses the reaction L-threonylcarbamoyladenylate + adenosine(37) in tRNA = N(6)-L-threonylcarbamoyladenosine(37) in tRNA + AMP + H(+). Required for the formation of a threonylcarbamoyl group on adenosine at position 37 (t(6)A37) in tRNAs that read codons beginning with adenine. Is involved in the transfer of the threonylcarbamoyl moiety of threonylcarbamoyl-AMP (TC-AMP) to the N6 group of A37, together with TsaE and TsaB. TsaD likely plays a direct catalytic role in this reaction. This Chelativorans sp. (strain BNC1) protein is tRNA N6-adenosine threonylcarbamoyltransferase.